The primary structure comprises 324 residues: Zinc transporter ZIP1 (324 aa).

Over M1 to K30 the chain is Extracellular. Residues L31–V51 traverse the membrane as a helical segment. The Cytoplasmic portion of the chain corresponds to L52–A68. The chain crosses the membrane as a helical span at residues L69 to L89. Residues P90–H104 are Extracellular-facing. The chain crosses the membrane as a helical span at residues V105–V125. Residues M126–R179 lie on the Cytoplasmic side of the membrane. Residues A180–L200 traverse the membrane as a helical segment. The Extracellular segment spans residues Q201 to R206. A helical membrane pass occupies residues A207–L227. The Cytoplasmic portion of the chain corresponds to R228–Q237. Residues V238–A258 traverse the membrane as a helical segment. At A259–Q272 the chain is on the extracellular side. A helical membrane pass occupies residues S273 to P293. Residues Q294 to I303 lie on the Cytoplasmic side of the membrane. The chain crosses the membrane as a helical span at residues L304–I324.

This sequence belongs to the ZIP transporter (TC 2.A.5) family. In terms of tissue distribution, ubiquitous, except in the pancreas. Highest levels seen in kidney, salivary gland and placenta.

The protein localises to the cell membrane. Its subcellular location is the endoplasmic reticulum membrane. The enzyme catalyses Zn(2+)(in) = Zn(2+)(out). In terms of biological role, transporter for the divalent cation Zn(2+). Mediates the influx of Zn(2+) into cells from extracellular space. The sequence is that of Zinc transporter ZIP1 (Slc39a1) from Mus musculus (Mouse).